Here is a 2710-residue protein sequence, read N- to C-terminus: Serine/threonine-protein kinase ATR (2710 aa).

Residues 1647-2257 (TLAKASFRCQ…LWMMAAVSKS (611 aa)) enclose the FAT domain. Residues 2368–2680 (IADDAEILNS…GVNAAPSLPL (313 aa)) form the PI3K/PI4K catalytic domain. Positions 2374–2380 (ILNSLQK) are G-loop. Positions 2545–2553 (GLGDRHGEN) are catalytic loop. Residues 2565–2589 (HVDFSCLFDKGLLLEKPEVVPFRFT) form an activation loop region. Residues 2678-2710 (LPLSVEGQARRLIAEAVSHSNLGKMYVWWMAWF) enclose the FATC domain.

The protein belongs to the PI3/PI4-kinase family. ATM subfamily.

It is found in the nucleus. The catalysed reaction is L-seryl-[protein] + ATP = O-phospho-L-seryl-[protein] + ADP + H(+). It carries out the reaction L-threonyl-[protein] + ATP = O-phospho-L-threonyl-[protein] + ADP + H(+). Its function is as follows. Probable serine/threonine kinase. Seems to play a central role in cell-cycle regulation by transmitting DNA damage signals to downstream effectors of cell-cycle progression. May recognize the substrate consensus sequence [ST]-Q and phosphorylate histone variant H2AX to form H2AXS139ph at sites of DNA damage, thereby regulating DNA damage response mechanism. In Oryza sativa subsp. indica (Rice), this protein is Serine/threonine-protein kinase ATR.